The following is a 788-amino-acid chain: Protein translocase subunit SecA 2 (788 aa).

ATP-binding positions include Q86, 104–108 (GEGKT), and D493.

The protein belongs to the SecA family. In terms of assembly, monomer and homodimer. Part of the essential Sec protein translocation apparatus which comprises SecA, SecYEG and auxiliary proteins SecDF. Other proteins may also be involved.

It localises to the cell membrane. The protein localises to the cytoplasm. The catalysed reaction is ATP + H2O + cellular proteinSide 1 = ADP + phosphate + cellular proteinSide 2.. Functionally, part of the Sec protein translocase complex. Interacts with the SecYEG preprotein conducting channel. Has a central role in coupling the hydrolysis of ATP to the transfer of proteins into and across the cell membrane, serving as an ATP-driven molecular motor driving the stepwise translocation of polypeptide chains across the membrane. This Bacillus anthracis protein is Protein translocase subunit SecA 2.